Here is a 901-residue protein sequence, read N- to C-terminus: Viral-enhancing factor (901 aa).

One can recognise a Peptidase M60 domain in the interval 27–330 (HRRTEVGVVL…IFTWLYNPQR (304 aa)). Residues Asn-65, Asn-265, Asn-339, Asn-349, Asn-540, Asn-594, Asn-595, Asn-642, Asn-683, and Asn-698 are each glycosylated (N-linked (GlcNAc...) asparagine; by host).

Functionally, involved in disruption of the peritrophic membrane and fusion of nucleocapsids with midgut cells. The protein is Viral-enhancing factor (VEF) of Trichoplusia ni (Cabbage looper).